Consider the following 4924-residue polypeptide: Hydroxamate-type ferrichrome siderophore peptide synthetase (4924 aa).

Carrier domains lie at 715–791 (NQSE…ILLK), 2172–2246 (DGFQ…KRRR), 3254–3328 (NVVE…NTQT), and 4402–4478 (IHLN…QYEK). Residues S752, S2206, S3288, and S4439 each carry the O-(pantetheine 4'-phosphoryl)serine modification.

The protein belongs to the ATP-dependent AMP-binding enzyme family.

It is found in the cytoplasm. In terms of biological role, involved in intracellular and extracellular ferrichrome siderophore biosynthesis. The protein is Hydroxamate-type ferrichrome siderophore peptide synthetase (sib1) of Schizosaccharomyces pombe (strain 972 / ATCC 24843) (Fission yeast).